A 314-amino-acid polypeptide reads, in one-letter code: MASRSKRRAVESGVPQPPDPPVQRDEEEEKEVENEDEDDDDSDKEKDEEDEVIDEEVNIEFEAYSLSDNDYDGIKKLLQQLFLKAPVNTAELTDLLIQQNHIGSVIKQTDVSEDSNDDMDEDEVFGFISLLNLTERKGTQCVEQIQELVLRFCEKNCEKSMVEQLDKFLNDTTKPVGLLLSERFINVPPQIALPMYQQLQKELAGAHRTNKPCGKCYFYLLISKTFVEAGKNNSKKKPSNKKKAALMFANAEEEFFYEKAILKFNYSVQEESDTCLGGKWSFDDVPMTPLRTVMLIPGDKMNEIMDKLKEYLSV.

Residues 1–56 (MASRSKRRAVESGVPQPPDPPVQRDEEEEKEVENEDEDDDDSDKEKDEEDEVIDEE) form a disordered region. A compositionally biased stretch (acidic residues) spans 25–56 (DEEEEKEVENEDEDDDDSDKEKDEEDEVIDEE). Phosphoserine is present on residues Ser42 and Ser112. The interval 59–167 (IEFEAYSLSD…EKSMVEQLDK (109 aa)) is interaction with BRCA2. Residues 161 to 259 (MVEQLDKFLN…NAEEEFFYEK (99 aa)) are interaction with CDKN1A. Ser281 carries the phosphoserine modification.

The protein belongs to the BCP1 family. In terms of assembly, interacts with BRCA2, CDKN1A and MTDH/LYRIC. Isoform 2/alpha, but not isoform 1/beta, interacts with DCTN1/p150-glued and ACTR1A/ARP1. Both isoform 1 and isoform 2 interact with alpha-, beta- and gamma-tubulins. Interacts with TENT5C; the interaction has no effect on TENT5C poly(A) polymerase function. As to expression, expressed at high levels in testis and skeletal muscle and at lower levels in brain, heart, kidney, liver, lung, ovary, pancreas, placenta, and spleen.

Its subcellular location is the nucleus. It localises to the cytoplasm. The protein resides in the cytoskeleton. It is found in the microtubule organizing center. The protein localises to the centrosome. Its subcellular location is the centriole. It localises to the spindle pole. During interphase, required for microtubule organizing and anchoring activities. During mitosis, required for the organization and stabilization of the spindle pole. Isoform 2/alpha is particularly important for the regulation of microtubule anchoring, microtubule stability, spindle architecture and spindle orientation, compared to isoform 1/beta. May promote cell cycle arrest by enhancing the inhibition of CDK2 activity by CDKN1A. May be required for repair of DNA damage by homologous recombination in conjunction with BRCA2. May not be involved in non-homologous end joining (NHEJ). The sequence is that of BRCA2 and CDKN1A-interacting protein (BCCIP) from Homo sapiens (Human).